We begin with the raw amino-acid sequence, 136 residues long: Nucleoside diphosphate kinase (136 aa).

Positions 10, 58, 86, 92, 104, and 114 each coordinate ATP. The Pros-phosphohistidine intermediate role is filled by histidine 117.

The protein belongs to the NDK family. In terms of assembly, homotetramer. It depends on Mg(2+) as a cofactor.

The protein resides in the cytoplasm. It catalyses the reaction a 2'-deoxyribonucleoside 5'-diphosphate + ATP = a 2'-deoxyribonucleoside 5'-triphosphate + ADP. The enzyme catalyses a ribonucleoside 5'-diphosphate + ATP = a ribonucleoside 5'-triphosphate + ADP. In terms of biological role, major role in the synthesis of nucleoside triphosphates other than ATP. The ATP gamma phosphate is transferred to the NDP beta phosphate via a ping-pong mechanism, using a phosphorylated active-site intermediate. This is Nucleoside diphosphate kinase from Mycobacterium marinum (strain ATCC BAA-535 / M).